The chain runs to 539 residues: Gamma-2-syntrophin (539 aa).

One can recognise a PDZ domain in the interval 73-156; the sequence is TVTLRRQPVG…DVTITVEYLR (84 aa). Positions 296-421 constitute a PH domain; the sequence is QVVHMGWVNE…WEKAFQRATF (126 aa).

Belongs to the syntrophin family. In terms of assembly, interacts with the dystrophin protein DMD and related proteins DTNA and DTNB.

Its subcellular location is the cell membrane. The protein localises to the sarcolemma. The protein resides in the cytoplasm. It localises to the cytoskeleton. In terms of biological role, adapter protein that binds to and probably organizes the subcellular localization of a variety of proteins. May link various receptors to the actin cytoskeleton and the dystrophin glycoprotein complex. The sequence is that of Gamma-2-syntrophin (Sntg2) from Mus musculus (Mouse).